A 521-amino-acid polypeptide reads, in one-letter code: Lysine--tRNA ligase (521 aa).

Residues 32 to 40 (PSGTVHIGN) carry the 'HIGH' region motif. The 'KMSKS' region motif lies at 280–284 (KISSS).

The protein belongs to the class-I aminoacyl-tRNA synthetase family.

The protein localises to the cytoplasm. It catalyses the reaction tRNA(Lys) + L-lysine + ATP = L-lysyl-tRNA(Lys) + AMP + diphosphate. The protein is Lysine--tRNA ligase of Borrelia garinii subsp. bavariensis (strain ATCC BAA-2496 / DSM 23469 / PBi) (Borreliella bavariensis).